The sequence spans 98 residues: Aspartyl/glutamyl-tRNA(Asn/Gln) amidotransferase subunit C (98 aa).

A disordered region spans residues 75–98; that stretch reads EQALSGAPDSDDNRFKVPAILDEA.

The protein belongs to the GatC family. As to quaternary structure, heterotrimer of A, B and C subunits.

The catalysed reaction is L-glutamyl-tRNA(Gln) + L-glutamine + ATP + H2O = L-glutaminyl-tRNA(Gln) + L-glutamate + ADP + phosphate + H(+). It carries out the reaction L-aspartyl-tRNA(Asn) + L-glutamine + ATP + H2O = L-asparaginyl-tRNA(Asn) + L-glutamate + ADP + phosphate + 2 H(+). Functionally, allows the formation of correctly charged Asn-tRNA(Asn) or Gln-tRNA(Gln) through the transamidation of misacylated Asp-tRNA(Asn) or Glu-tRNA(Gln) in organisms which lack either or both of asparaginyl-tRNA or glutaminyl-tRNA synthetases. The reaction takes place in the presence of glutamine and ATP through an activated phospho-Asp-tRNA(Asn) or phospho-Glu-tRNA(Gln). In Pseudarthrobacter chlorophenolicus (strain ATCC 700700 / DSM 12829 / CIP 107037 / JCM 12360 / KCTC 9906 / NCIMB 13794 / A6) (Arthrobacter chlorophenolicus), this protein is Aspartyl/glutamyl-tRNA(Asn/Gln) amidotransferase subunit C.